Consider the following 629-residue polypeptide: tRNA uridine 5-carboxymethylaminomethyl modification enzyme MnmG (629 aa).

FAD-binding positions include 13–18 (GGGHAG), V125, and S180. Position 273 to 287 (273 to 287 (GPRYCPSIEDKVMRF)) interacts with NAD(+). Q370 contacts FAD.

This sequence belongs to the MnmG family. Homodimer. Heterotetramer of two MnmE and two MnmG subunits. FAD is required as a cofactor.

Its subcellular location is the cytoplasm. Functionally, NAD-binding protein involved in the addition of a carboxymethylaminomethyl (cmnm) group at the wobble position (U34) of certain tRNAs, forming tRNA-cmnm(5)s(2)U34. This Klebsiella pneumoniae subsp. pneumoniae (strain ATCC 700721 / MGH 78578) protein is tRNA uridine 5-carboxymethylaminomethyl modification enzyme MnmG.